Consider the following 260-residue polypeptide: Uroplakin-1b (260 aa).

Topologically, residues 1–15 (MAKDDSTVRCFQGLL) are cytoplasmic. A helical transmembrane segment spans residues 16 to 36 (IFGHVIVGMCGIALTAECIFF). At 37–59 (VSDQHSLYPLLEATNNDDIFGAA) the chain is on the extracellular side. Residues 60-80 (WIGMFVGICLFCLSVLAIVGI) form a helical membrane-spanning segment. The Cytoplasmic segment spans residues 81–86 (MKSNRK). Residues 87 to 107 (ILLAYFIMMFIVYGFEVASCI) form a helical membrane-spanning segment. Residues 108-229 (TAATQRDFFT…ELISGPMDRH (122 aa)) are Extracellular-facing. The chain crosses the membrane as a helical span at residues 230-250 (AWGVAWFGFAILCWTFWVLLG). Residues 251 to 260 (TMFYWSRIEY) are Cytoplasmic-facing.

It belongs to the tetraspanin (TM4SF) family. As to quaternary structure, heterodimer with uroplakin-3A (UPK3A) or uroplakin-3B (UPK3B). In terms of processing, N-glycosylated with high-mannose oligosaccharides.

The protein localises to the membrane. Component of the asymmetric unit membrane (AUM); a highly specialized biomembrane elaborated by terminally differentiated urothelial cells. May play an important role in normal bladder epithelial physiology, possibly in regulating membrane permeability of superficial umbrella cells or in stabilizing the apical membrane through AUM/cytoskeletal interactions. In Rattus norvegicus (Rat), this protein is Uroplakin-1b (Upk1b).